The chain runs to 365 residues: Protein RecA (365 aa).

69-76 (GPESSGKT) contacts ATP. Residues 344–365 (LDDNPDTDDHDVEDIDENTDEE) are disordered. Positions 347–365 (NPDTDDHDVEDIDENTDEE) are enriched in acidic residues.

It belongs to the RecA family.

It is found in the cytoplasm. Functionally, can catalyze the hydrolysis of ATP in the presence of single-stranded DNA, the ATP-dependent uptake of single-stranded DNA by duplex DNA, and the ATP-dependent hybridization of homologous single-stranded DNAs. It interacts with LexA causing its activation and leading to its autocatalytic cleavage. The chain is Protein RecA from Arthrospira platensis (Spirulina platensis).